Consider the following 396-residue polypeptide: Elongation factor Tu (396 aa).

The tr-type G domain occupies 10-206 (KPHVNVGTIG…ALDASIPEPK (197 aa)). Residues 19 to 26 (GHVDHGKT) are G1. 19–26 (GHVDHGKT) contributes to the GTP binding site. A Mg(2+)-binding site is contributed by Thr26. The tract at residues 60–64 (GITIS) is G2. Positions 81–84 (DCPG) are G3. GTP-binding positions include 81–85 (DCPGH) and 136–139 (NKAD). Residues 136 to 139 (NKAD) are G4. The G5 stretch occupies residues 174–176 (SAL).

This sequence belongs to the TRAFAC class translation factor GTPase superfamily. Classic translation factor GTPase family. EF-Tu/EF-1A subfamily. As to quaternary structure, monomer.

It localises to the cytoplasm. It catalyses the reaction GTP + H2O = GDP + phosphate + H(+). In terms of biological role, GTP hydrolase that promotes the GTP-dependent binding of aminoacyl-tRNA to the A-site of ribosomes during protein biosynthesis. The chain is Elongation factor Tu from Dichelobacter nodosus (strain VCS1703A).